The sequence spans 272 residues: Glutamate racemase (272 aa).

Substrate is bound by residues 13–14 (DS) and 45–46 (YG). C76 (proton donor/acceptor) is an active-site residue. 77–78 (NT) is a substrate binding site. The active-site Proton donor/acceptor is C186. 187–188 (TH) contacts substrate.

This sequence belongs to the aspartate/glutamate racemases family.

The catalysed reaction is L-glutamate = D-glutamate. The protein operates within cell wall biogenesis; peptidoglycan biosynthesis. In terms of biological role, provides the (R)-glutamate required for cell wall biosynthesis. In Cupriavidus pinatubonensis (strain JMP 134 / LMG 1197) (Cupriavidus necator (strain JMP 134)), this protein is Glutamate racemase.